A 181-amino-acid polypeptide reads, in one-letter code: Monofunctional chorismate mutase (181 aa).

The signal sequence occupies residues 1–20; that stretch reads MIRHIAIFLCSLLMCSTTFA. The region spanning 21-102 is the Chorismate mutase domain; that stretch reads DSVTSVSLGA…ASKAIQYRYL (82 aa). Substrate is bound by residues arginine 38, lysine 49, aspartate 58, glutamate 62, and glutamine 98.

The protein resides in the periplasm. It catalyses the reaction chorismate = prephenate. It functions in the pathway metabolic intermediate biosynthesis; prephenate biosynthesis; prephenate from chorismate: step 1/1. Its function is as follows. Catalyzes the Claisen rearrangement of chorismate to prephenate. This Salmonella typhimurium protein is Monofunctional chorismate mutase.